We begin with the raw amino-acid sequence, 217 residues long: Transmembrane protein 253 (217 aa).

The next 4 membrane-spanning stretches (helical) occupy residues 33-53 (LVLAVSQLWLAVVVVPLAVSV), 62-82 (MATALPLGPGASGLLTGTVTL), 96-116 (MMIFNTFNLILGFIVVVVEVM), and 138-158 (LSAEAFTLGGVLVSVHALFLL). Residues 187–217 (PGLENGPTVASTGANERVGQREQTRAALLPP) form a disordered region.

It localises to the membrane. This Homo sapiens (Human) protein is Transmembrane protein 253 (TMEM253).